A 461-amino-acid polypeptide reads, in one-letter code: Fumarate hydratase class II (461 aa).

Residues 97 to 99, 127 to 130, 137 to 139, and T185 contribute to the substrate site; these read SGT, HPND, and SSN. H186 (proton donor/acceptor) is an active-site residue. S316 is an active-site residue. Substrate contacts are provided by residues S317 and 322 to 324; that span reads KVN.

This sequence belongs to the class-II fumarase/aspartase family. Fumarase subfamily. In terms of assembly, homotetramer.

The protein localises to the cytoplasm. It catalyses the reaction (S)-malate = fumarate + H2O. It participates in carbohydrate metabolism; tricarboxylic acid cycle; (S)-malate from fumarate: step 1/1. Its function is as follows. Involved in the TCA cycle. Catalyzes the stereospecific interconversion of fumarate to L-malate. The sequence is that of Fumarate hydratase class II from Staphylococcus aureus (strain COL).